Here is a 493-residue protein sequence, read N- to C-terminus: Glutamyl-tRNA(Gln) amidotransferase subunit A (493 aa).

Residues Lys-81 and Ser-156 each act as charge relay system in the active site. Ser-180 serves as the catalytic Acyl-ester intermediate.

Belongs to the amidase family. GatA subfamily. As to quaternary structure, heterotrimer of A, B and C subunits.

The enzyme catalyses L-glutamyl-tRNA(Gln) + L-glutamine + ATP + H2O = L-glutaminyl-tRNA(Gln) + L-glutamate + ADP + phosphate + H(+). Allows the formation of correctly charged Gln-tRNA(Gln) through the transamidation of misacylated Glu-tRNA(Gln) in organisms which lack glutaminyl-tRNA synthetase. The reaction takes place in the presence of glutamine and ATP through an activated gamma-phospho-Glu-tRNA(Gln). The sequence is that of Glutamyl-tRNA(Gln) amidotransferase subunit A from Mycobacterium ulcerans (strain Agy99).